A 119-amino-acid polypeptide reads, in one-letter code: Beta-2-microglobulin (119 aa).

A signal peptide spans 1–20 (MARSVTVIFLVLVSLAVVLA). Positions 25–114 (PQIQVYSRHP…VTLKEPKTVT (90 aa)) constitute an Ig-like C1-type domain. A disulfide bridge connects residues Cys-45 and Cys-100.

Belongs to the beta-2-microglobulin family. As to quaternary structure, heterodimer of an alpha chain and a beta chain. Beta-2-microglobulin is the beta-chain of major histocompatibility complex class I molecules. Forms a heterotrimer with MR1 and a metabolite antigen.

It is found in the secreted. Functionally, component of the class I major histocompatibility complex (MHC). Involved in the presentation of peptide antigens to the immune system. This chain is Beta-2-microglobulin (B2m), found in Rattus norvegicus (Rat).